We begin with the raw amino-acid sequence, 330 residues long: Diacylglycerol acyltransferase/mycolyltransferase Ag85B (330 aa).

An N-terminal signal peptide occupies residues 1-40 (MTDLSEKVRAWGRRLLVGAAAAVTLPGLIGLAGGAATANA). 82–83 (LR) provides a ligand contact to substrate. Residues 98-108 (FEWYYQSGLSV) are fibronectin-binding. Cysteine 127 and cysteine 132 are disulfide-bonded. 2 residues coordinate substrate: serine 166 and aspartate 194. The Nucleophile role is filled by serine 166. Glutamate 270 is an active-site residue. Residues 272–275 (FVRS), lysine 279, and 302–304 (HSW) contribute to the substrate site. Residue histidine 302 is part of the active site.

Belongs to the mycobacterial A85 antigen family.

The protein localises to the secreted. It carries out the reaction 2 alpha,alpha'-trehalose 6-mycolate = alpha,alpha'-trehalose 6,6'-bismycolate + alpha,alpha-trehalose. It catalyses the reaction an acyl-CoA + a 1,2-diacyl-sn-glycerol = a triacyl-sn-glycerol + CoA. In terms of biological role, the antigen 85 proteins (FbpA, FbpB, FbpC) are responsible for the high affinity of mycobacteria for fibronectin, a large adhesive glycoprotein, which facilitates the attachment of M.tuberculosis to murine alveolar macrophages (AMs). They also help to maintain the integrity of the cell wall by catalyzing the transfer of mycolic acids to cell wall arabinogalactan and through the synthesis of alpha,alpha-trehalose dimycolate (TDM, cord factor). They catalyze the transfer of a mycoloyl residue from one molecule of alpha,alpha-trehalose monomycolate (TMM) to another TMM, leading to the formation of TDM. This Mycobacterium avium protein is Diacylglycerol acyltransferase/mycolyltransferase Ag85B (fbpB).